The following is a 211-amino-acid chain: Endonuclease V (211 aa).

Residues Asp-31 and Glu-95 each contribute to the Mg(2+) site. The tract at residues 182-211 (IYEVKNTPSPNRSRKKRGNRGKDNNNSQGN) is disordered.

The protein belongs to the endonuclease V family. Requires Mg(2+) as cofactor.

It is found in the cytoplasm. The enzyme catalyses Endonucleolytic cleavage at apurinic or apyrimidinic sites to products with a 5'-phosphate.. DNA repair enzyme involved in the repair of deaminated bases. Selectively cleaves double-stranded DNA at the second phosphodiester bond 3' to a deoxyinosine leaving behind the intact lesion on the nicked DNA. This Pyrococcus horikoshii (strain ATCC 700860 / DSM 12428 / JCM 9974 / NBRC 100139 / OT-3) protein is Endonuclease V.